Reading from the N-terminus, the 488-residue chain is Protein nucleotidyltransferase YdiU (488 aa).

ATP is bound by residues Gly91, Gly93, Arg94, Lys114, Asp126, Gly127, Arg177, and Arg184. The active-site Proton acceptor is the Asp253. Mg(2+) is bound by residues Asn254 and Asp263. Residue Asp263 coordinates ATP.

It belongs to the SELO family. Requires Mg(2+) as cofactor. The cofactor is Mn(2+).

It catalyses the reaction L-seryl-[protein] + ATP = 3-O-(5'-adenylyl)-L-seryl-[protein] + diphosphate. The enzyme catalyses L-threonyl-[protein] + ATP = 3-O-(5'-adenylyl)-L-threonyl-[protein] + diphosphate. It carries out the reaction L-tyrosyl-[protein] + ATP = O-(5'-adenylyl)-L-tyrosyl-[protein] + diphosphate. The catalysed reaction is L-histidyl-[protein] + UTP = N(tele)-(5'-uridylyl)-L-histidyl-[protein] + diphosphate. It catalyses the reaction L-seryl-[protein] + UTP = O-(5'-uridylyl)-L-seryl-[protein] + diphosphate. The enzyme catalyses L-tyrosyl-[protein] + UTP = O-(5'-uridylyl)-L-tyrosyl-[protein] + diphosphate. Functionally, nucleotidyltransferase involved in the post-translational modification of proteins. It can catalyze the addition of adenosine monophosphate (AMP) or uridine monophosphate (UMP) to a protein, resulting in modifications known as AMPylation and UMPylation. This chain is Protein nucleotidyltransferase YdiU, found in Bacillus cereus (strain G9842).